The chain runs to 180 residues: Large ribosomal subunit protein uL5 (180 aa).

Belongs to the universal ribosomal protein uL5 family. As to quaternary structure, part of the 50S ribosomal subunit; part of the 5S rRNA/L5/L18/L25 subcomplex. Contacts the 5S rRNA and the P site tRNA. Forms a bridge to the 30S subunit in the 70S ribosome.

Its function is as follows. This is one of the proteins that bind and probably mediate the attachment of the 5S RNA into the large ribosomal subunit, where it forms part of the central protuberance. In the 70S ribosome it contacts protein S13 of the 30S subunit (bridge B1b), connecting the 2 subunits; this bridge is implicated in subunit movement. Contacts the P site tRNA; the 5S rRNA and some of its associated proteins might help stabilize positioning of ribosome-bound tRNAs. This Lactobacillus johnsonii (strain CNCM I-12250 / La1 / NCC 533) protein is Large ribosomal subunit protein uL5.